The following is an 878-amino-acid chain: DNA mismatch repair protein MutS (878 aa).

618 to 625 (GPNMGGKS) is an ATP binding site. Composition is skewed to basic and acidic residues over residues 800–811 (LEEESSRQRAEP) and 863–878 (GADK…ARSR). 2 disordered regions span residues 800–842 (LEEE…PDEL) and 859–878 (SGEE…ARSR).

The protein belongs to the DNA mismatch repair MutS family.

Its function is as follows. This protein is involved in the repair of mismatches in DNA. It is possible that it carries out the mismatch recognition step. This protein has a weak ATPase activity. This is DNA mismatch repair protein MutS from Alkalilimnicola ehrlichii (strain ATCC BAA-1101 / DSM 17681 / MLHE-1).